The chain runs to 245 residues: 14-3-3 protein zeta (245 aa).

This sequence belongs to the 14-3-3 family. In terms of assembly, homodimer. Present in all adult tissues examined with the highest levels in the brain.

The protein resides in the cytoplasm. Its function is as follows. Adapter protein implicated in the regulation of a large spectrum of both general and specialized signaling pathways. Binds to a large number of partners, usually by recognition of a phosphoserine or phosphothreonine motif. Binding generally results in the modulation of the activity of the binding partner. This chain is 14-3-3 protein zeta (ywhaz), found in Xenopus laevis (African clawed frog).